An 82-amino-acid chain; its full sequence is Conotoxin MiK42 (82 aa).

The first 22 residues, 1–22 (MKLTCALIVAMLLLTACQLITT), serve as a signal peptide directing secretion. Positions 23–49 (DDFRGRQQYRTARSRTKMQNYKIFRLT) are excised as a propeptide. Disulfide bonds link Cys-52-Cys-67, Cys-59-Cys-70, and Cys-66-Cys-80.

The protein belongs to the conotoxin O1 superfamily. Expressed by the venom duct.

It localises to the secreted. In Conus miles (Soldier cone), this protein is Conotoxin MiK42.